Reading from the N-terminus, the 234-residue chain is Glucosamine-6-phosphate deaminase (234 aa).

Asp-62 (proton acceptor; for enolization step) is an active-site residue. Asn-128 functions as the For ring-opening step in the catalytic mechanism. The active-site Proton acceptor; for ring-opening step is His-130. Glu-135 functions as the For ring-opening step in the catalytic mechanism.

The protein belongs to the glucosamine/galactosamine-6-phosphate isomerase family. NagB subfamily.

It catalyses the reaction alpha-D-glucosamine 6-phosphate + H2O = beta-D-fructose 6-phosphate + NH4(+). It functions in the pathway amino-sugar metabolism; N-acetylneuraminate degradation; D-fructose 6-phosphate from N-acetylneuraminate: step 5/5. Catalyzes the reversible isomerization-deamination of glucosamine 6-phosphate (GlcN6P) to form fructose 6-phosphate (Fru6P) and ammonium ion. The chain is Glucosamine-6-phosphate deaminase from Streptococcus pyogenes serotype M49 (strain NZ131).